A 271-amino-acid polypeptide reads, in one-letter code: Probable redox regulatory protein SCO3349 (271 aa).

2 disordered regions span residues 1–21 (MPKTKKAKDEKSAKKDKKHIA) and 109–130 (AEGTRNGWTSEDDEGSRQTRPF). Over residues 7 to 21 (AKDEKSAKKDKKHIA) the composition is skewed to basic and acidic residues.

Belongs to the Rv0495c family.

Functionally, essential for maintaining intracellular redox homeostasis. In Streptomyces coelicolor (strain ATCC BAA-471 / A3(2) / M145), this protein is Probable redox regulatory protein SCO3349.